The chain runs to 1135 residues: DNA-directed RNA polymerase I subunit RPA2 (1135 aa).

The segment at 1–26 (MDVDGRWRNLPSGPSLKHLTDPSYGI) is disordered. Arg180 provides a ligand contact to RNA. A loop B region spans residues 194–208 (VRPKWKSRGLGYTQF). The loop A stretch occupies residues 236–247 (LNFIYRKELFFL). Asp367 serves as a coordination point for RNA. 2 fork loop regions span residues 439-453 (LRSK…DSGL) and 474-489 (RGAA…VRRL). Residue Asp755 participates in Mg(2+) binding. Lys890 is an RNA binding site. DNA is bound by residues Lys1020 and Arg1036. Ser1051 carries the phosphoserine modification. Residues Cys1070, Cys1073, Cys1098, and Cys1101 each contribute to the Zn(2+) site. The C4-type zinc-finger motif lies at 1070–1101 (CVECGSLLSPLLEKPPPSWSAMRNRKYNCTVC).

Belongs to the RNA polymerase beta chain family. Component of the RNA polymerase I (Pol I) complex consisting of 13 subunits: a ten-subunit catalytic core composed of POLR1A/RPA1, POLR1B/RPA2, POLR1C/RPAC1, POLR1D/RPAC2, POLR1H/RPA12, POLR2E/RPABC1, POLR2F/RPABC2, POLR2H/RPABC3, POLR2K/RPABC4 and POLR2L/RPABC5; a mobile stalk subunit POLR1F/RPA43 protruding from the core and additional subunits homologous to general transcription factors POLR1E/RPA49 and POLR1G/RPA34. Part of Pol I pre-initiation complex (PIC), in which Pol I core assembles with RRN3 and promoter-bound UTBF and SL1/TIF-IB complex. Requires Mg(2+) as cofactor.

The protein localises to the nucleus. Its subcellular location is the nucleolus. The protein resides in the chromosome. It carries out the reaction RNA(n) + a ribonucleoside 5'-triphosphate = RNA(n+1) + diphosphate. Catalytic core component of RNA polymerase I (Pol I), a DNA-dependent RNA polymerase which synthesizes ribosomal RNA precursors using the four ribonucleoside triphosphates as substrates. Transcribes 47S pre-rRNAs from multicopy rRNA gene clusters, giving rise to 5.8S, 18S and 28S ribosomal RNAs. Pol I-mediated transcription cycle proceeds through transcription initiation, transcription elongation and transcription termination stages. During transcription initiation, Pol I pre-initiation complex (PIC) is recruited by the selectivity factor 1 (SL1/TIF-IB) complex bound to the core promoter that precedes an rDNA repeat unit. The PIC assembly bends the promoter favoring the formation of the transcription bubble and promoter escape. Once the polymerase has escaped from the promoter it enters the elongation phase during which RNA is actively polymerized, based on complementarity with the template DNA strand. Highly processive, assembles in structures referred to as 'Miller trees' where many elongating Pol I complexes queue and transcribe the same rDNA coding regions. At terminator sequences downstream of the rDNA gene, PTRF interacts with Pol I and halts Pol I transcription leading to the release of the RNA transcript and polymerase from the DNA. Forms Pol I active center together with the largest subunit POLR1A/RPA1. Appends one nucleotide at a time to the 3' end of the nascent RNA, with POLR1A/RPA1 contributing a Mg(2+)-coordinating DxDGD motif, and POLR1B/RPA2 participating in the coordination of a second Mg(2+) ion and providing lysine residues believed to facilitate Watson-Crick base pairing between the incoming nucleotide and the template base. Typically, Mg(2+) ions direct a 5' nucleoside triphosphate to form a phosphodiester bond with the 3' hydroxyl of the preceding nucleotide of the nascent RNA, with the elimination of pyrophosphate. Has proofreading activity: Pauses and backtracks to allow the cleavage of a missincorporated nucleotide via POLR1H/RPA12. High Pol I processivity is associated with decreased transcription fidelity. This Mus musculus (Mouse) protein is DNA-directed RNA polymerase I subunit RPA2.